A 621-amino-acid chain; its full sequence is 1-deoxy-D-xylulose-5-phosphate synthase (621 aa).

Thiamine diphosphate-binding positions include H80 and G121–S123. Residue D152 participates in Mg(2+) binding. Thiamine diphosphate is bound by residues G153–A154, N181, Y288, and E370. N181 lines the Mg(2+) pocket.

The protein belongs to the transketolase family. DXPS subfamily. Homodimer. It depends on Mg(2+) as a cofactor. Thiamine diphosphate is required as a cofactor.

It catalyses the reaction D-glyceraldehyde 3-phosphate + pyruvate + H(+) = 1-deoxy-D-xylulose 5-phosphate + CO2. It functions in the pathway metabolic intermediate biosynthesis; 1-deoxy-D-xylulose 5-phosphate biosynthesis; 1-deoxy-D-xylulose 5-phosphate from D-glyceraldehyde 3-phosphate and pyruvate: step 1/1. In terms of biological role, catalyzes the acyloin condensation reaction between C atoms 2 and 3 of pyruvate and glyceraldehyde 3-phosphate to yield 1-deoxy-D-xylulose-5-phosphate (DXP). The polypeptide is 1-deoxy-D-xylulose-5-phosphate synthase (Shewanella woodyi (strain ATCC 51908 / MS32)).